The primary structure comprises 36 residues: Hemoglobin subunit beta (36 aa).

A Globin domain is found at 1–36; it reads VCVLAHHFGKEFTPQVQAAYQKVVAGVANALAHKYH. N6-acetyllysine is present on K34.

It belongs to the globin family. Heterotetramer of two alpha chains and two beta chains. Red blood cells.

Functionally, involved in oxygen transport from the lung to the various peripheral tissues. This chain is Hemoglobin subunit beta (HBB), found in Pongo pygmaeus (Bornean orangutan).